The following is a 299-amino-acid chain: 33 kDa chaperonin (299 aa).

2 disulfide bridges follow: C234-C236 and C268-C271.

This sequence belongs to the HSP33 family. In terms of processing, under oxidizing conditions two disulfide bonds are formed involving the reactive cysteines. Under reducing conditions zinc is bound to the reactive cysteines and the protein is inactive.

It is found in the cytoplasm. Its function is as follows. Redox regulated molecular chaperone. Protects both thermally unfolding and oxidatively damaged proteins from irreversible aggregation. Plays an important role in the bacterial defense system toward oxidative stress. The protein is 33 kDa chaperonin of Pseudomonas putida (strain GB-1).